The following is a 60-amino-acid chain: Large ribosomal subunit protein bL32 (60 aa).

The segment at 1–60 (MAVQQNKKSPSKRGMHRSHNALTVPGIAVESTTGETHLRHHISPTGFYRGRKVLKTKSEA) is disordered. Composition is skewed to basic residues over residues 9–19 (SPSKRGMHRSH) and 49–60 (RGRKVLKTKSEA).

The protein belongs to the bacterial ribosomal protein bL32 family.

The sequence is that of Large ribosomal subunit protein bL32 from Polaromonas sp. (strain JS666 / ATCC BAA-500).